The sequence spans 374 residues: Putative glutamate--cysteine ligase 2 (374 aa).

This sequence belongs to the glutamate--cysteine ligase type 2 family. YbdK subfamily.

It carries out the reaction L-cysteine + L-glutamate + ATP = gamma-L-glutamyl-L-cysteine + ADP + phosphate + H(+). Its function is as follows. ATP-dependent carboxylate-amine ligase which exhibits weak glutamate--cysteine ligase activity. This Acidovorax ebreus (strain TPSY) (Diaphorobacter sp. (strain TPSY)) protein is Putative glutamate--cysteine ligase 2.